The following is a 124-amino-acid chain: Transmembrane protein 254 (124 aa).

The next 3 helical transmembrane spans lie at L16 to P36, V62 to V82, and L96 to F116.

Its subcellular location is the membrane. The chain is Transmembrane protein 254 (TMEM254) from Bos taurus (Bovine).